The primary structure comprises 453 residues: Bifunctional protein GlmU (453 aa).

The pyrophosphorylase stretch occupies residues 1 to 231 (MERTCLAIIL…EVEMTGCNNR (231 aa)). UDP-N-acetyl-alpha-D-glucosamine contacts are provided by residues 10–13 (LAAG), lysine 24, glutamine 77, 82–83 (GT), 105–107 (YGD), glycine 143, glutamate 157, asparagine 172, and asparagine 229. Aspartate 107 is a binding site for Mg(2+). Asparagine 229 contacts Mg(2+). Residues 232–252 (AELAFIERLWQERRRHELMLS) form a linker region. The N-acetyltransferase stretch occupies residues 253–453 (GVTMIAPETV…AIKAAKKGSH (201 aa)). UDP-N-acetyl-alpha-D-glucosamine contacts are provided by arginine 318 and lysine 336. The active-site Proton acceptor is histidine 348. UDP-N-acetyl-alpha-D-glucosamine-binding residues include tyrosine 351 and asparagine 362. Acetyl-CoA-binding positions include alanine 365, 371–372 (NY), serine 390, serine 408, and arginine 425.

The protein in the N-terminal section; belongs to the N-acetylglucosamine-1-phosphate uridyltransferase family. It in the C-terminal section; belongs to the transferase hexapeptide repeat family. In terms of assembly, homotrimer. Mg(2+) serves as cofactor.

It is found in the cytoplasm. The catalysed reaction is alpha-D-glucosamine 1-phosphate + acetyl-CoA = N-acetyl-alpha-D-glucosamine 1-phosphate + CoA + H(+). The enzyme catalyses N-acetyl-alpha-D-glucosamine 1-phosphate + UTP + H(+) = UDP-N-acetyl-alpha-D-glucosamine + diphosphate. The protein operates within nucleotide-sugar biosynthesis; UDP-N-acetyl-alpha-D-glucosamine biosynthesis; N-acetyl-alpha-D-glucosamine 1-phosphate from alpha-D-glucosamine 6-phosphate (route II): step 2/2. Its pathway is nucleotide-sugar biosynthesis; UDP-N-acetyl-alpha-D-glucosamine biosynthesis; UDP-N-acetyl-alpha-D-glucosamine from N-acetyl-alpha-D-glucosamine 1-phosphate: step 1/1. It participates in bacterial outer membrane biogenesis; LPS lipid A biosynthesis. Functionally, catalyzes the last two sequential reactions in the de novo biosynthetic pathway for UDP-N-acetylglucosamine (UDP-GlcNAc). The C-terminal domain catalyzes the transfer of acetyl group from acetyl coenzyme A to glucosamine-1-phosphate (GlcN-1-P) to produce N-acetylglucosamine-1-phosphate (GlcNAc-1-P), which is converted into UDP-GlcNAc by the transfer of uridine 5-monophosphate (from uridine 5-triphosphate), a reaction catalyzed by the N-terminal domain. The chain is Bifunctional protein GlmU from Rhizobium rhizogenes (strain K84 / ATCC BAA-868) (Agrobacterium radiobacter).